The following is a 358-amino-acid chain: B3 domain-containing transcription factor NGA3 (358 aa).

Over residues 1 to 14 (MDLSLAPTTTTSSD) the composition is skewed to polar residues. A disordered region spans residues 1–45 (MDLSLAPTTTTSSDQEQDRDQELTSNIGASSSSGPSGNNNNLPMM). Residues 25-45 (SNIGASSSSGPSGNNNNLPMM) are compositionally biased toward low complexity. Positions 56–162 (FDKVVTPSDV…KLYIDWRHRP (107 aa)) form a DNA-binding region, TF-B3. The tract at residues 310–358 (EIGASSSSSSALRLNLSTDHDDDNDDGDDGDDDQFAKKGKSSLSLNFNP) is disordered. Over residues 329–342 (HDDDNDDGDDGDDD) the composition is skewed to acidic residues.

It localises to the nucleus. Its function is as follows. Regulates lateral organ growth. Functionally redundant with NGA1, NGA2 and NGA4. In Arabidopsis thaliana (Mouse-ear cress), this protein is B3 domain-containing transcription factor NGA3 (NGA3).